The following is a 475-amino-acid chain: Citrate synthase, mitochondrial (475 aa).

Residues His-310, His-356, and Asp-411 contribute to the active site.

Belongs to the citrate synthase family.

It is found in the mitochondrion matrix. The enzyme catalyses oxaloacetate + acetyl-CoA + H2O = citrate + CoA + H(+). The protein operates within carbohydrate metabolism; tricarboxylic acid cycle; isocitrate from oxaloacetate: step 1/2. This chain is Citrate synthase, mitochondrial (cit-1), found in Aspergillus niger.